Consider the following 556-residue polypeptide: 2-succinyl-5-enolpyruvyl-6-hydroxy-3-cyclohexene-1-carboxylate synthase (556 aa).

Belongs to the TPP enzyme family. MenD subfamily. In terms of assembly, homodimer. Mg(2+) serves as cofactor. It depends on Mn(2+) as a cofactor. Requires thiamine diphosphate as cofactor.

The enzyme catalyses isochorismate + 2-oxoglutarate + H(+) = 5-enolpyruvoyl-6-hydroxy-2-succinyl-cyclohex-3-ene-1-carboxylate + CO2. The protein operates within quinol/quinone metabolism; 1,4-dihydroxy-2-naphthoate biosynthesis; 1,4-dihydroxy-2-naphthoate from chorismate: step 2/7. It functions in the pathway quinol/quinone metabolism; menaquinone biosynthesis. Its function is as follows. Catalyzes the thiamine diphosphate-dependent decarboxylation of 2-oxoglutarate and the subsequent addition of the resulting succinic semialdehyde-thiamine pyrophosphate anion to isochorismate to yield 2-succinyl-5-enolpyruvyl-6-hydroxy-3-cyclohexene-1-carboxylate (SEPHCHC). The polypeptide is 2-succinyl-5-enolpyruvyl-6-hydroxy-3-cyclohexene-1-carboxylate synthase (Escherichia coli O45:K1 (strain S88 / ExPEC)).